Reading from the N-terminus, the 330-residue chain is Ferredoxin--NADP reductase (330 aa).

FAD contacts are provided by Glu-35, Gln-43, Tyr-48, Val-90, Phe-123, Asp-285, and Thr-326.

It belongs to the ferredoxin--NADP reductase type 2 family. Homodimer. The cofactor is FAD.

The enzyme catalyses 2 reduced [2Fe-2S]-[ferredoxin] + NADP(+) + H(+) = 2 oxidized [2Fe-2S]-[ferredoxin] + NADPH. This chain is Ferredoxin--NADP reductase, found in Streptococcus agalactiae serotype Ia (strain ATCC 27591 / A909 / CDC SS700).